A 227-amino-acid chain; its full sequence is Sensory transduction protein RegX3 (227 aa).

The region spanning 3-116 (SVLIVEDEES…ELIARIRAVL (114 aa)) is the Response regulatory domain. The residue at position 52 (Asp52) is a 4-aspartylphosphate. Positions 128 to 227 (DGVLESGPVR…VRGLGYKLEG (100 aa)) form a DNA-binding region, ompR/PhoB-type.

Post-translationally, phosphorylated by SenX3.

Functionally, member of the two-component regulatory system SenX3/RegX3. Specifically binds to the promoter region of the senX3-regX3 operon. The protein is Sensory transduction protein RegX3 of Mycobacterium bovis (strain ATCC BAA-935 / AF2122/97).